The primary structure comprises 474 residues: Glutathione synthetase (474 aa).

N-acetylalanine is present on Ala-2. Residue Arg-125 coordinates substrate. An ATP-binding site is contributed by Glu-144. 2 residues coordinate Mg(2+): Glu-144 and Asn-146. Substrate-binding positions include 148 to 151 (ISAS), 214 to 216 (ERN), Gln-220, and 267 to 270 (RDGY). ATP-binding positions include Lys-305, 364–373 (KPQREGGGNN), Tyr-375, and 398–401 (MEKT). Glu-368 lines the Mg(2+) pocket. At Ser-415 the chain carries Phosphoserine. Glu-425 contacts ATP. A substrate-binding site is contributed by Arg-450. ATP is bound by residues Lys-452 and Asp-458. 461 to 462 (VA) contacts substrate.

It belongs to the eukaryotic GSH synthase family. As to quaternary structure, homodimer. It depends on Mg(2+) as a cofactor.

The enzyme catalyses gamma-L-glutamyl-L-cysteine + glycine + ATP = glutathione + ADP + phosphate + H(+). The protein operates within sulfur metabolism; glutathione biosynthesis; glutathione from L-cysteine and L-glutamate: step 2/2. Functionally, catalyzes the production of glutathione from gamma-glutamylcysteine and glycine in an ATP-dependent manner. Glutathione (gamma-glutamylcysteinylglycine, GSH) is the most abundant intracellular thiol in living aerobic cells and is required for numerous processes including the protection of cells against oxidative damage, amino acid transport, the detoxification of foreign compounds, the maintenance of protein sulfhydryl groups in a reduced state and acts as a cofactor for a number of enzymes. In Macaca fascicularis (Crab-eating macaque), this protein is Glutathione synthetase (GSS).